The chain runs to 369 residues: tRNA(Met) cytidine acetate ligase (369 aa).

ATP contacts are provided by residues 7 to 20, glycine 96, asparagine 152, and arginine 175; that span reads VAEF…HKYL.

The protein belongs to the TmcAL family.

The protein localises to the cytoplasm. It catalyses the reaction cytidine(34) in elongator tRNA(Met) + acetate + ATP = N(4)-acetylcytidine(34) in elongator tRNA(Met) + AMP + diphosphate. Its function is as follows. Catalyzes the formation of N(4)-acetylcytidine (ac(4)C) at the wobble position of elongator tRNA(Met), using acetate and ATP as substrates. First activates an acetate ion to form acetyladenylate (Ac-AMP) and then transfers the acetyl group to tRNA to form ac(4)C34. The chain is tRNA(Met) cytidine acetate ligase from Streptococcus agalactiae serotype Ia (strain ATCC 27591 / A909 / CDC SS700).